The following is a 91-amino-acid chain: Putative septation protein SpoVG (91 aa).

The protein belongs to the SpoVG family.

Functionally, could be involved in septation. This is Putative septation protein SpoVG from Caldanaerobacter subterraneus subsp. tengcongensis (strain DSM 15242 / JCM 11007 / NBRC 100824 / MB4) (Thermoanaerobacter tengcongensis).